Consider the following 825-residue polypeptide: NT-3 growth factor receptor (825 aa).

A signal peptide spans 1–31; it reads MDVSLCPAKCSFWRIFLLGSVWLDYVGSVLA. Cystine bridges form between cysteine 32–cysteine 38 and cysteine 36–cysteine 45. Residues 32–429 are Extracellular-facing; that stretch reads CPANCVCSKT…TVTHKPEEDT (398 aa). 3 N-linked (GlcNAc...) asparagine glycosylation sites follow: asparagine 68, asparagine 72, and asparagine 79. 2 LRR repeats span residues 104–125 and 128–149; these read GLQK…AFAK and HLRY…LFQT. Residues asparagine 133 and asparagine 163 are each glycosylated (N-linked (GlcNAc...) asparagine). The region spanning 160–209 is the LRRCT domain; it reads NFFNCSCDIRWMQLWQEQGEARLNSQNLYCINADGSQLPLFRMNISQCDL. Cystine bridges form between cysteine 164/cysteine 189 and cysteine 166/cysteine 207. 7 N-linked (GlcNAc...) asparagine glycosylation sites follow: asparagine 203, asparagine 218, asparagine 232, asparagine 259, asparagine 267, asparagine 272, and asparagine 294. Ig-like C2-type domains lie at 210–300 and 309–382; these read PEIS…VALT and SLEE…IAKN. Cysteine 231 and cysteine 284 form a disulfide bridge. An intrachain disulfide couples cysteine 320 to cysteine 362. N-linked (GlcNAc...) asparagine glycans are attached at residues asparagine 375 and asparagine 388. The helical transmembrane segment at 430 to 453 threads the bilayer; sequence FGVSIAVGLAAFACVLLVVLFIMI. At 454-825 the chain is on the cytoplasmic side; the sequence is NKYGRRSKFG…ATPIYLDILG (372 aa). Serine 493 bears the Phosphoserine mark. Tyrosine 516 is modified (phosphotyrosine; by autocatalysis). The 288-residue stretch at 538–825 folds into the Protein kinase domain; that stretch reads IVLKRELGEG…ATPIYLDILG (288 aa). ATP contacts are provided by residues 544–552 and lysine 572; that span reads LGEGAFGKV. The active-site Proton acceptor is aspartate 679. Residues tyrosine 705, tyrosine 709, and tyrosine 710 each carry the phosphotyrosine; by autocatalysis modification.

It belongs to the protein kinase superfamily. Tyr protein kinase family. Insulin receptor subfamily. As to quaternary structure, exists in a dynamic equilibrium between monomeric (low affinity) and dimeric (high affinity) structures. Binds SH2B2. Interacts with SQSTM1 and KIDINS220. Interacts with PTPRS. Interacts with MAPK8IP3/JIP3. In terms of processing, ligand-mediated auto-phosphorylation.

The protein localises to the membrane. The enzyme catalyses L-tyrosyl-[protein] + ATP = O-phospho-L-tyrosyl-[protein] + ADP + H(+). In terms of biological role, receptor tyrosine kinase involved in nervous system and probably heart development. Upon binding of its ligand NTF3/neurotrophin-3, NTRK3 autophosphorylates and activates different signaling pathways, including the phosphatidylinositol 3-kinase/AKT and the MAPK pathways, that control cell survival and differentiation. The protein is NT-3 growth factor receptor (NTRK3) of Saimiri boliviensis boliviensis (Bolivian squirrel monkey).